Here is a 22-residue protein sequence, read N- to C-terminus: uncharacterized protein (22 aa).

Residues 3 to 22 (MFITGYDINQKQKKRYGLRG) form a helical membrane-spanning segment.

The protein belongs to the asfivirus C84L family.

The protein localises to the host membrane. This is an uncharacterized protein from Ornithodoros (relapsing fever ticks).